The chain runs to 128 residues: Disintegrin lebein-2-alpha (128 aa).

An N-terminal signal peptide occupies residues 1 to 20 (MIQVLLVTICLAVFPFHGSS). Residues 21–46 (IILESGNVNDYEVVYPKKVTLLPTGA) constitute a propeptide that is removed on maturation. Residues 47–111 (MNSANPCCDP…SDCPRNPWKS (65 aa)) enclose the Disintegrin domain. 4 cysteine pairs are disulfide-bonded: Cys53–Cys76, Cys67–Cys73, Cys72–Cys97, and Cys85–Cys104. A Cell attachment site; atypical (MLD) motif is present at residues 89–91 (MLD). A propeptide spanning residues 112–128 (EEDEMKWSATAKGSVLM) is cleaved from the precursor.

It belongs to the disintegrin family. Dimeric disintegrin subfamily. Heterodimer with subunit beta; disulfide-linked. In terms of tissue distribution, expressed by the venom gland.

The protein localises to the secreted. In terms of biological role, inhibits ADP-induced human platelet aggregation. Antagonist of alpha-IIb/beta-3 (ITGA2B/ITGB3). Also avidly binds to the laminin-binding beta-1 integrins (alpha-3/beta-1 (ITGA3/ITGB1), alpha-6/beta-1 (ITGA6/ITGB1), and alpha-7/beta-1 (ITGA7/ITGB1)) in an RGD-independent manner. The sequence is that of Disintegrin lebein-2-alpha from Macrovipera lebetinus (Levantine viper).